The primary structure comprises 496 residues: Protein RepS (496 aa).

The DNA-binding element occupies 120–141 (SDILTTAIDLGFMPTLIIKSDK).

Its function is as follows. Essential for replication. The sequence is that of Protein RepS (repS) from Streptococcus pyogenes.